The following is a 474-amino-acid chain: MSLQAPSRLLELAGQSLLRNQFLTIFTLDELPREVFPLMFMEAFSMRRFEALKLMVQAWPFLRLPLGSLMKTPHLETLQAVLRGLDTLVAQKVRPRRWKLQVLDLRDVDENFWTIWSGARVLSCSPEAMSKRQTVEDCPRMGERQPLKVFIDLCLKESTLDECLSYLFGWIHYRRGLVHLCCSKVQNYSMPTSSFRNLLERIYPDSIQELEVWKKCSLNKTGKFAPYLSQMSNLRELFLAFGYERELYVSVQWPCIPDLDSPFLCLYYPQMLYIKKISNIKEHLEHLLRYLKNPLGAFIFSDAYLTDRDMECLSQYPSLSQLKELRLIHILMWTTNLEPLGVLLEKVAATLKTLVLKDCRIQDPQLRVLLPALSHCSQLTTFNFHGNETSMNALKDLLRHTRGLSKLGLELYPAPLESLDYKGHVNWEILTPIRAELMRTLREVRQPKRIFFGPVPCPNCGSWPSEKVDFHLCS.

An LRR 1; degenerate repeat occupies 97 to 124 (RWKLQVLDLRDVDENFWTIWSGARVLSC). The LRR 2; degenerate repeat unit spans residues 179–203 (HLCCSKVQNYSMPTSSFRNLLERIY). The LRR 3; degenerate repeat unit spans residues 204 to 230 (PDSIQELEVWKKCSLNKTGKFAPYLSQ). Residues 231–265 (MSNLRELFLAFGYERELYVSVQWPCIPDLDSPFLC) form an LRR 4; degenerate repeat. 5 LRR repeats span residues 266–291 (LYYP…LRYL), 292–323 (KNPL…SQLK), 324–342 (ELRL…PLGV), 348–375 (AATL…ALSH), and 376–400 (CSQL…LLRH).

This sequence belongs to the PRAME family.

This chain is PRAME family member 10, found in Homo sapiens (Human).